The sequence spans 685 residues: Pentatricopeptide repeat-containing protein At5g19020, mitochondrial (685 aa).

The N-terminal 23 residues, Met-1–Phe-23, are a transit peptide targeting the mitochondrion. PPR repeat units follow at residues Thr-40 to Ser-74, Asn-75 to Leu-105, Asp-106 to Arg-136, Ser-137 to Leu-171, Asn-172 to Gly-206, Arg-207 to Arg-237, Asn-238 to Lys-268, Asp-269 to Pro-303, Ser-304 to Cys-338, Tyr-339 to Asp-369, His-370 to Lys-400, Asp-401 to Lys-435, Asp-437 to Pro-471, Asn-472 to Ile-502, Thr-506 to Pro-540, Asn-541 to Pro-576, and Asp-577 to Lys-607. The segment at Ile-612–Val-685 is type E motif; degenerate.

The protein belongs to the PPR family. PCMP-E subfamily.

It is found in the mitochondrion. The sequence is that of Pentatricopeptide repeat-containing protein At5g19020, mitochondrial (PCMP-E42) from Arabidopsis thaliana (Mouse-ear cress).